A 431-amino-acid polypeptide reads, in one-letter code: Glucose-1-phosphate adenylyltransferase (431 aa).

Beta-D-fructose 1,6-bisphosphate is bound at residue lysine 39. AMP contacts are provided by arginine 40, histidine 46, and arginine 52. Tyrosine 114 contributes to the alpha-D-glucose 1-phosphate binding site. Residue arginine 130 coordinates AMP. Alpha-D-glucose 1-phosphate-binding positions include glycine 179, glutamate 194–lysine 195, and serine 212. AMP contacts are provided by glutamate 370 and arginine 386. Beta-D-fructose 1,6-bisphosphate contacts are provided by residues arginine 419–arginine 423 and glutamine 429–arginine 431.

The protein belongs to the bacterial/plant glucose-1-phosphate adenylyltransferase family. As to quaternary structure, homotetramer.

It carries out the reaction alpha-D-glucose 1-phosphate + ATP + H(+) = ADP-alpha-D-glucose + diphosphate. The protein operates within glycan biosynthesis; glycogen biosynthesis. Its activity is regulated as follows. Allosterically activated by fructose-1,6-bisphosphate (F16BP) and inhibited by AMP. In terms of biological role, involved in the biosynthesis of ADP-glucose, a building block required for the elongation reactions to produce glycogen. Catalyzes the reaction between ATP and alpha-D-glucose 1-phosphate (G1P) to produce pyrophosphate and ADP-Glc. This chain is Glucose-1-phosphate adenylyltransferase, found in Salmonella arizonae (strain ATCC BAA-731 / CDC346-86 / RSK2980).